A 146-amino-acid polypeptide reads, in one-letter code: FAD synthase (146 aa).

Residues 9–10 (TF), 14–17 (HPGH), and Asp92 each bind ATP.

This sequence belongs to the archaeal FAD synthase family. In terms of assembly, homodimer. A divalent metal cation serves as cofactor.

It carries out the reaction FMN + ATP + H(+) = FAD + diphosphate. The protein operates within cofactor biosynthesis; FAD biosynthesis; FAD from FMN: step 1/1. Catalyzes the transfer of the AMP portion of ATP to flavin mononucleotide (FMN) to produce flavin adenine dinucleotide (FAD) coenzyme. This is FAD synthase from Halobacterium salinarum (strain ATCC 29341 / DSM 671 / R1).